The primary structure comprises 308 residues: Glutaminase 2 (308 aa).

The substrate site is built by Ser66, Asn117, Glu161, Asn168, Tyr192, Tyr244, and Val262.

This sequence belongs to the glutaminase family. In terms of assembly, homotetramer.

It carries out the reaction L-glutamine + H2O = L-glutamate + NH4(+). The chain is Glutaminase 2 from Shigella flexneri.